The following is a 295-amino-acid chain: Phosphoribosylaminoimidazole-succinocarboxamide synthase (295 aa).

Belongs to the SAICAR synthetase family.

It carries out the reaction 5-amino-1-(5-phospho-D-ribosyl)imidazole-4-carboxylate + L-aspartate + ATP = (2S)-2-[5-amino-1-(5-phospho-beta-D-ribosyl)imidazole-4-carboxamido]succinate + ADP + phosphate + 2 H(+). Its pathway is purine metabolism; IMP biosynthesis via de novo pathway; 5-amino-1-(5-phospho-D-ribosyl)imidazole-4-carboxamide from 5-amino-1-(5-phospho-D-ribosyl)imidazole-4-carboxylate: step 1/2. This is Phosphoribosylaminoimidazole-succinocarboxamide synthase from Halorhodospira halophila (strain DSM 244 / SL1) (Ectothiorhodospira halophila (strain DSM 244 / SL1)).